The primary structure comprises 126 residues: Histone H2B type 1-M (126 aa).

Residues 1–36 (MPEPVKSAPVPKKGSKKAINKAQKKDGKKRKRSRKE) form a disordered region. Pro2 carries the N-acetylproline modification. The residue at position 3 (Glu3) is an ADP-ribosyl glutamic acid. Lys6 carries the post-translational modification N6-(2-hydroxyisobutyryl)lysine; alternate. Lys6 bears the N6-(beta-hydroxybutyryl)lysine; alternate mark. Lys6 is modified (N6-acetyllysine; alternate). An N6-butyryllysine; alternate modification is found at Lys6. Lys6 bears the N6-crotonyllysine; alternate mark. The residue at position 6 (Lys6) is an N6-lactoyllysine; alternate. Lys6 is covalently cross-linked (Glycyl lysine isopeptide (Lys-Gly) (interchain with G-Cter in SUMO2); alternate). The residue at position 7 (Ser7) is an ADP-ribosylserine. Lys12 is modified (N6-(beta-hydroxybutyryl)lysine; alternate). N6-acetyllysine; alternate is present on residues Lys12 and Lys13. An N6-crotonyllysine; alternate mark is found at Lys12 and Lys13. Lys12 is subject to N6-lactoyllysine; alternate. Lys13 carries the post-translational modification N6-(2-hydroxyisobutyryl)lysine; alternate. The residue at position 15 (Ser15) is a Phosphoserine; by STK4/MST1. Residues Lys16, Lys17, Lys21, and Lys24 each carry the N6-acetyllysine; alternate modification. N6-crotonyllysine; alternate occurs at positions 16, 17, 21, and 24. N6-lactoyllysine; alternate occurs at positions 16, 17, 21, and 24. Lys17 and Lys21 each carry N6-(beta-hydroxybutyryl)lysine; alternate. The residue at position 17 (Lys17) is an N6-glutaryllysine; alternate. N6-(2-hydroxyisobutyryl)lysine; alternate occurs at positions 21 and 24. Lys21 bears the N6-butyryllysine; alternate mark. Lys21 participates in a covalent cross-link: Glycyl lysine isopeptide (Lys-Gly) (interchain with G-Cter in SUMO2); alternate. Lys25 is modified (N6-(2-hydroxyisobutyryl)lysine). Lys35 carries the N6-(2-hydroxyisobutyryl)lysine; alternate modification. Lys35 carries the N6-(beta-hydroxybutyryl)lysine; alternate modification. Residue Lys35 is modified to N6-crotonyllysine; alternate. Lys35 carries the post-translational modification N6-glutaryllysine; alternate. N6-succinyllysine; alternate is present on Lys35. Lys35 participates in a covalent cross-link: Glycyl lysine isopeptide (Lys-Gly) (interchain with G-Cter in ubiquitin); alternate. The residue at position 36 (Glu36) is a PolyADP-ribosyl glutamic acid. Ser37 carries the phosphoserine; by AMPK modification. 3 positions are modified to N6-(2-hydroxyisobutyryl)lysine; alternate: Lys44, Lys47, and Lys58. N6-lactoyllysine; alternate is present on Lys44. Residues Lys44 and Lys47 each carry the N6-glutaryllysine; alternate modification. Lys47 is modified (N6-methyllysine; alternate). N6,N6-dimethyllysine; alternate is present on Lys58. Arg80 carries the post-translational modification Dimethylated arginine. Lys86 carries the N6-(2-hydroxyisobutyryl)lysine; alternate modification. Lys86 bears the N6-(beta-hydroxybutyryl)lysine; alternate mark. An N6-acetyllysine; alternate modification is found at Lys86. The residue at position 86 (Lys86) is an N6-lactoyllysine; alternate. N6,N6,N6-trimethyllysine; alternate is present on Lys86. Residues Arg87 and Arg93 each carry the omega-N-methylarginine modification. Position 109 is an N6-(2-hydroxyisobutyryl)lysine; alternate (Lys109). Position 109 is an N6-lactoyllysine; alternate (Lys109). Residue Lys109 is modified to N6-glutaryllysine; alternate. Lys109 is modified (N6-methyllysine; alternate). Ser113 is a glycosylation site (O-linked (GlcNAc) serine). Thr116 is subject to Phosphothreonine. An N6-(2-hydroxyisobutyryl)lysine; alternate mark is found at Lys117 and Lys121. An N6-(beta-hydroxybutyryl)lysine; alternate mark is found at Lys117 and Lys121. N6-lactoyllysine; alternate is present on residues Lys117 and Lys121. N6-glutaryllysine; alternate is present on residues Lys117 and Lys121. 2 positions are modified to N6-succinyllysine; alternate: Lys117 and Lys121. The residue at position 117 (Lys117) is an N6-malonyllysine; alternate. N6-methylated lysine; alternate is present on Lys117. Lys121 is covalently cross-linked (Glycyl lysine isopeptide (Lys-Gly) (interchain with G-Cter in ubiquitin); alternate).

It belongs to the histone H2B family. In terms of assembly, the nucleosome is a histone octamer containing two molecules each of H2A, H2B, H3 and H4 assembled in one H3-H4 heterotetramer and two H2A-H2B heterodimers. The octamer wraps approximately 147 bp of DNA. Post-translationally, monoubiquitination at Lys-35 (H2BK34Ub) by the MSL1/MSL2 dimer is required for histone H3 'Lys-4' (H3K4me) and 'Lys-79' (H3K79me) methylation and transcription activation at specific gene loci, such as HOXA9 and MEIS1 loci. Similarly, monoubiquitination at Lys-121 (H2BK120Ub) by the RNF20/40 complex gives a specific tag for epigenetic transcriptional activation and is also prerequisite for histone H3 'Lys-4' and 'Lys-79' methylation. It also functions cooperatively with the FACT dimer to stimulate elongation by RNA polymerase II. H2BK120Ub also acts as a regulator of mRNA splicing: deubiquitination by USP49 is required for efficient cotranscriptional splicing of a large set of exons. In terms of processing, phosphorylation at Ser-37 (H2BS36ph) by AMPK in response to stress promotes transcription. Phosphorylated on Ser-15 (H2BS14ph) by STK4/MST1 during apoptosis; which facilitates apoptotic chromatin condensation. Also phosphorylated on Ser-15 in response to DNA double strand breaks (DSBs), and in correlation with somatic hypermutation and immunoglobulin class-switch recombination. GlcNAcylation at Ser-113 promotes monoubiquitination of Lys-121. It fluctuates in response to extracellular glucose, and associates with transcribed genes. Post-translationally, ADP-ribosylated by PARP1 or PARP2 on Ser-7 (H2BS6ADPr) in response to DNA damage. H2BS6ADPr promotes recruitment of CHD1L. Mono-ADP-ribosylated on Glu-3 (H2BE2ADPr) by PARP3 in response to single-strand breaks. Poly ADP-ribosylation on Glu-36 (H2BE35ADPr) by PARP1 regulates adipogenesis: it inhibits phosphorylation at Ser-37 (H2BS36ph), thereby blocking expression of pro-adipogenetic genes. In terms of processing, crotonylation (Kcr) is specifically present in male germ cells and marks testis-specific genes in post-meiotic cells, including X-linked genes that escape sex chromosome inactivation in haploid cells. Crotonylation marks active promoters and enhancers and confers resistance to transcriptional repressors. It is also associated with post-meiotically activated genes on autosomes. Lactylated in macrophages by EP300/P300 by using lactoyl-CoA directly derived from endogenous or exogenous lactate, leading to stimulates gene transcription.

It localises to the nucleus. The protein resides in the chromosome. In terms of biological role, core component of nucleosome. Nucleosomes wrap and compact DNA into chromatin, limiting DNA accessibility to the cellular machineries which require DNA as a template. Histones thereby play a central role in transcription regulation, DNA repair, DNA replication and chromosomal stability. DNA accessibility is regulated via a complex set of post-translational modifications of histones, also called histone code, and nucleosome remodeling. This chain is Histone H2B type 1-M, found in Homo sapiens (Human).